We begin with the raw amino-acid sequence, 206 residues long: Large ribosomal subunit protein uL4 (206 aa).

Residues 48-97 (THAVKNRSLVSGGGKKPWKQKHTGRARQGSTRASQWVGGGKAMGPKPRDY) are disordered. A compositionally biased stretch (basic residues) spans 63-72 (KPWKQKHTGR).

The protein belongs to the universal ribosomal protein uL4 family. As to quaternary structure, part of the 50S ribosomal subunit.

Its function is as follows. One of the primary rRNA binding proteins, this protein initially binds near the 5'-end of the 23S rRNA. It is important during the early stages of 50S assembly. It makes multiple contacts with different domains of the 23S rRNA in the assembled 50S subunit and ribosome. In terms of biological role, forms part of the polypeptide exit tunnel. The polypeptide is Large ribosomal subunit protein uL4 (Anaeromyxobacter dehalogenans (strain 2CP-1 / ATCC BAA-258)).